The following is a 1055-amino-acid chain: MSKQRKKADLATVLRKSWYHLRLSVRHPTRVPTWDAIVLTAASPEQAELYDWQLRRAKRMGRIASSTVTLAVPDPDGKRIGSGAATLNAIYALARHYEKLGFDLGPEMEVANGACKWVRFISAKHVLMLHAGGDSKRVPWANPMGKVFLPLPYLAADDPDGPVPLLFDHILAIASCARQAFQDQGGLFIMTGDVLPCFDAFKMTLPEDAASIVTVPITLDIASNHGVIVTSKSESLAESYTVSLVNDLLQKPTVEDLVKKDAILHDGRTLLDTGIISARGRAWSDLVALGCSCQPMILELIGSKKEMSLYEDLVAAWVPSRHDWLRTRPLGELLVNSLGRQKMYSYCTYDLQFLHFGTSSEVLDHLSGDASGIVGRRHLCSIPATTVSDIAASSVILSSEIAPGVSIGEDSLIYDSTVSGAVQIGSQSIVVGIHIPSEDLGTPESFRFMLPDRHCLWEVPLVGHKGRVIVYCGLHDNPKNSIHKDGTFCGKPLEKVLFDLGIEESDLWSSYVAQDRCLWNAKLFPILTYSEMLKLASWLMGLDDSRNKEKIKLWRSSQRVSLEELHGSINFPEMCNGSSNHQADLAGGIAKACMNYGMLGRNLSQLCHEILQKESLGLEICKNFLDQCPKFQEQNSKILPKSRAYQVEVDLLRACGDEAKAIELEHKVWGAVAEETASAVRYGFREHLLESSGKSHSENHISHPDRVFQPRRTKVELPVRVDFVGGWSDTPPWSLERAGYVLNMAITLEGSLPIGTIIETTNQMGISIQDDAGNELHIEDPISIKTPFEVNDPFRLVKSALLVTGIVQENFVDSTGLAIKTWANVPRGSGLGTSSILAAAVVKGLLQISNGDESNENIARLVLVLEQLMGTGGGWQDQIGGLYPGIKFTSSFPGIPMRLQVVPLLASPQLISELEQRLLVVFTGQVRLAHQVLHKVVTRYLQRDNLLISSIKRLTELAKSGREALMNCEVDEVGDIMSEAWRLHQELDPYCSNEFVDKLFEFSQPYSSGFKLVGAGGGGFSLILAKDAEKAKELRQRLEEHAEFDVKVYNWSICI.

The segment at 34-565 is GDP-fucose pyrophosphorylase; sequence WDAIVLTAAS…SSQRVSLEEL (532 aa). An L-fucokinase region spans residues 693–1055; the sequence is GKSHSENHIS…VKVYNWSICI (363 aa). 826-836 provides a ligand contact to ATP; it reads PRGSGLGTSSI.

Belongs to the GHMP kinase family. Mn(2+) is required as a cofactor. It depends on Mg(2+) as a cofactor. Ubiquitous. Highest expression in flower buds.

The enzyme catalyses L-fucose + ATP = beta-L-fucose 1-phosphate + ADP + H(+). It catalyses the reaction beta-L-fucose 1-phosphate + GTP + H(+) = GDP-beta-L-fucose + diphosphate. In terms of biological role, bifunctional enzyme involved in the salvage pathway which converts free L-fucose to GDP-L-fucose. Catalyzes two successive reactions, the ATP-dependent phosphorylation of L-fucose to L-fucose 1-phosphate, and its guanylylation to GDP-L-fucose. The sugar-1-kinase activity has a strict substrate specificity for L-fucose and ATP. The pyrophosphorylase activity has a strict substrate specificity for L-fucose 1-phosphate and GTP. In Arabidopsis thaliana (Mouse-ear cress), this protein is Bifunctional fucokinase/GDP-fucose pyrophosphorylase (FKGP).